The chain runs to 156 residues: Small ribosomal subunit protein uS7 (156 aa).

It belongs to the universal ribosomal protein uS7 family. Part of the 30S ribosomal subunit. Contacts proteins S9 and S11.

One of the primary rRNA binding proteins, it binds directly to 16S rRNA where it nucleates assembly of the head domain of the 30S subunit. Is located at the subunit interface close to the decoding center, probably blocks exit of the E-site tRNA. The protein is Small ribosomal subunit protein uS7 of Salinispora arenicola (strain CNS-205).